The primary structure comprises 213 residues: Small ribosomal subunit protein uS4 (213 aa).

Positions 16 to 53 (GTDLGLKSGVKPYDVKTKKSARPPGQHGVSRNKSSEYS) are disordered. Over residues 44–53 (VSRNKSSEYS) the composition is skewed to polar residues. Residues 97 to 163 (SRLDNVVYRM…EKSREQLRIK (67 aa)) form the S4 RNA-binding domain.

It belongs to the universal ribosomal protein uS4 family. In terms of assembly, part of the 30S ribosomal subunit. Contacts protein S5. The interaction surface between S4 and S5 is involved in control of translational fidelity.

Its function is as follows. One of the primary rRNA binding proteins, it binds directly to 16S rRNA where it nucleates assembly of the body of the 30S subunit. In terms of biological role, with S5 and S12 plays an important role in translational accuracy. This is Small ribosomal subunit protein uS4 from Psychrobacter arcticus (strain DSM 17307 / VKM B-2377 / 273-4).